The chain runs to 344 residues: GTPase Obg (344 aa).

One can recognise an Obg domain in the interval 1–159; that stretch reads MKFLDLAKVY…RTIWLRLKLI (159 aa). The OBG-type G domain occupies 160-327; sequence ADVGLLGLPN…VLRALRARID (168 aa). GTP is bound by residues 166–173, 191–195, 212–215, 279–282, and 308–310; these read GLPNAGKS, FTTLH, DIPG, NKID, and SGA. Residues S173 and T193 each coordinate Mg(2+).

Belongs to the TRAFAC class OBG-HflX-like GTPase superfamily. OBG GTPase family. Monomer. Requires Mg(2+) as cofactor.

Its subcellular location is the cytoplasm. An essential GTPase which binds GTP, GDP and possibly (p)ppGpp with moderate affinity, with high nucleotide exchange rates and a fairly low GTP hydrolysis rate. Plays a role in control of the cell cycle, stress response, ribosome biogenesis and in those bacteria that undergo differentiation, in morphogenesis control. In Ruegeria pomeroyi (strain ATCC 700808 / DSM 15171 / DSS-3) (Silicibacter pomeroyi), this protein is GTPase Obg.